A 196-amino-acid chain; its full sequence is Imidazoleglycerol-phosphate dehydratase (196 aa).

Belongs to the imidazoleglycerol-phosphate dehydratase family.

The protein resides in the cytoplasm. It catalyses the reaction D-erythro-1-(imidazol-4-yl)glycerol 3-phosphate = 3-(imidazol-4-yl)-2-oxopropyl phosphate + H2O. It participates in amino-acid biosynthesis; L-histidine biosynthesis; L-histidine from 5-phospho-alpha-D-ribose 1-diphosphate: step 6/9. This Phenylobacterium zucineum (strain HLK1) protein is Imidazoleglycerol-phosphate dehydratase.